Here is a 403-residue protein sequence, read N- to C-terminus: DNA primase DnaG (403 aa).

Residues 172 to 248 form the Toprim domain; the sequence is DSVIIVEGRA…HIDYIARAPP (77 aa). 3 residues coordinate Mg(2+): Glu178, Asp222, and Asp224. The disordered stretch occupies residues 279–300; the sequence is AAGEKTEAPAQPTQQQPPPAEA.

Belongs to the archaeal DnaG primase family. As to quaternary structure, forms a ternary complex with MCM helicase and DNA. Component of the archaeal exosome complex. Requires Mg(2+) as cofactor.

It carries out the reaction ssDNA + n NTP = ssDNA/pppN(pN)n-1 hybrid + (n-1) diphosphate.. Functionally, RNA polymerase that catalyzes the synthesis of short RNA molecules used as primers for DNA polymerase during DNA replication. Also part of the exosome, which is a complex involved in RNA degradation. Acts as a poly(A)-binding protein that enhances the interaction between heteromeric, adenine-rich transcripts and the exosome. The chain is DNA primase DnaG from Pyrobaculum neutrophilum (strain DSM 2338 / JCM 9278 / NBRC 100436 / V24Sta) (Thermoproteus neutrophilus).